The primary structure comprises 776 residues: Protein translocase subunit SecA 2 (776 aa).

ATP-binding positions include glutamine 80, 98–102, and aspartate 486; that span reads GEGKT.

The protein belongs to the SecA family. As to quaternary structure, monomer and homodimer. Part of the essential Sec protein translocation apparatus which comprises SecA, SecYEG and auxiliary proteins SecDF. Other proteins may also be involved.

It localises to the cell membrane. The protein resides in the cytoplasm. It carries out the reaction ATP + H2O + cellular proteinSide 1 = ADP + phosphate + cellular proteinSide 2.. In terms of biological role, part of the Sec protein translocase complex. Interacts with the SecYEG preprotein conducting channel. Has a central role in coupling the hydrolysis of ATP to the transfer of proteins into and across the cell membrane, serving as an ATP-driven molecular motor driving the stepwise translocation of polypeptide chains across the membrane. In Listeria innocua serovar 6a (strain ATCC BAA-680 / CLIP 11262), this protein is Protein translocase subunit SecA 2.